We begin with the raw amino-acid sequence, 261 residues long: Tryptophan synthase alpha chain (261 aa).

Residues Glu49 and Asp60 each act as proton acceptor in the active site.

The protein belongs to the TrpA family. Tetramer of two alpha and two beta chains.

It carries out the reaction (1S,2R)-1-C-(indol-3-yl)glycerol 3-phosphate + L-serine = D-glyceraldehyde 3-phosphate + L-tryptophan + H2O. It functions in the pathway amino-acid biosynthesis; L-tryptophan biosynthesis; L-tryptophan from chorismate: step 5/5. Its function is as follows. The alpha subunit is responsible for the aldol cleavage of indoleglycerol phosphate to indole and glyceraldehyde 3-phosphate. The sequence is that of Tryptophan synthase alpha chain from Roseiflexus sp. (strain RS-1).